The following is a 113-amino-acid chain: Thioredoxin H-type (113 aa).

In terms of domain architecture, Thioredoxin spans 2-112 (GGSVIVIDSK…LKALVAKHAA (111 aa)). Catalysis depends on nucleophile residues Cys37 and Cys40. A disulfide bridge links Cys37 with Cys40.

Belongs to the thioredoxin family. Plant H-type subfamily.

The protein localises to the cytoplasm. In terms of biological role, participates in various redox reactions through the reversible oxidation of the active center dithiol to a disulfide. The H form is known to activate a number of cytosolic enzymes. This Chlamydomonas reinhardtii (Chlamydomonas smithii) protein is Thioredoxin H-type (TRXH).